We begin with the raw amino-acid sequence, 497 residues long: Probable cytosol aminopeptidase (497 aa).

2 residues coordinate Mn(2+): Lys-263 and Asp-268. Lys-275 is a catalytic residue. Asp-286, Asp-345, and Glu-347 together coordinate Mn(2+). Arg-349 is a catalytic residue.

This sequence belongs to the peptidase M17 family. Mn(2+) is required as a cofactor.

The protein resides in the cytoplasm. The enzyme catalyses Release of an N-terminal amino acid, Xaa-|-Yaa-, in which Xaa is preferably Leu, but may be other amino acids including Pro although not Arg or Lys, and Yaa may be Pro. Amino acid amides and methyl esters are also readily hydrolyzed, but rates on arylamides are exceedingly low.. The catalysed reaction is Release of an N-terminal amino acid, preferentially leucine, but not glutamic or aspartic acids.. Presumably involved in the processing and regular turnover of intracellular proteins. Catalyzes the removal of unsubstituted N-terminal amino acids from various peptides. This chain is Probable cytosol aminopeptidase, found in Agrobacterium fabrum (strain C58 / ATCC 33970) (Agrobacterium tumefaciens (strain C58)).